The chain runs to 101 residues: MSNATVDDMDENLVGPVIRAGDLADAVIDAVIADNPGKEVHVIERGDYVRIHTDRDCRLTRASIEQALGRSFVLAAIEAEMSSFKGRMSSSDSEMRWYYKS.

It belongs to the TmoD/XamoD family. Monomer. The alkene monooxygenase multicomponent enzyme system is composed of an electron transfer component and a monooxygenase component interacting with the effector protein XamoD. The electron transfer component is composed of a ferredoxin reductase (XamoF) and a ferredoxin (XamoC), and the monooxygenase component is formed by a heterohexamer (dimer of heterotrimers) of two alpha subunits (XamoA), two beta subunits (XamoE) and two gamma subunits (XamoB).

It localises to the cytoplasm. Its function is as follows. Effector component of the alkene monooxygenase multicomponent enzyme system which catalyzes the O2- and NADH-dependent epoxidation of short chain (C2 to C6) alkenes to their corresponding epoxides. One possible role of this small protein might be to facilitate electron transfer between the reductase and ferredoxin components. The polypeptide is Alkene monooxygenase system, effector subunit (Xanthobacter autotrophicus (strain ATCC BAA-1158 / Py2)).